The sequence spans 467 residues: Transcription factor TGAL7 (467 aa).

A compositionally biased stretch (basic and acidic residues) spans 1–10; that stretch reads MGGSREEDRQ. Disordered stretches follow at residues 1–42 and 105–184; these read MGGS…KESS and QLQV…KTLR. Over residues 25–41 the composition is skewed to low complexity; sequence SSSPTTMIASSSMSKES. Positions 120 to 129 are enriched in polar residues; the sequence is QGGQKINSSV. Residues 145–157 show a composition bias toward basic and acidic residues; it reads KDNKNSSLIKKEG. A compositionally biased stretch (polar residues) spans 158-168; that stretch reads SSSGKGATTSN. Residues 169 to 182 show a composition bias toward basic and acidic residues; that stretch reads DPEREGRRTLDPKT. Residues 179-223 enclose the bZIP domain; sequence DPKTLRRLAQNREAARKSRLRKKAYIQQLESSRIRLSQLEQQVHV. Residues 181-201 form a basic motif region; that stretch reads KTLRRLAQNREAARKSRLRKK. Positions 207–221 are leucine-zipper; that stretch reads LESSRIRLSQLEQQV. The region spanning 247 to 458 is the DOG1 domain; sequence ASLFDLEYGR…RALSTLWVAR (212 aa).

The protein belongs to the bZIP family. As to quaternary structure, interacts with NPR5/NH4, NH5.1 and NH5.2.

Its subcellular location is the nucleus. Its function is as follows. Transcriptional regulator involved in defense response. In Oryza sativa subsp. japonica (Rice), this protein is Transcription factor TGAL7.